A 148-amino-acid chain; its full sequence is Caltractin (148 aa).

EF-hand domains are found at residues 4 to 39, 40 to 75, 77 to 112, and 113 to 148; these read EQKQ…LGFE, PKKE…KMGE, DSRE…LGEN, and MTDE…TSLF. Asp17, Asp19, Ser21, Thr23, Glu28, Asp53, Asp55, Ser57, Thr59, and Glu64 together coordinate Ca(2+). The Ca(2+) site is built by Asp126, Asp128, Asp130, Glu132, and Glu137.

The protein belongs to the centrin family. As to expression, ubiquitous.

Functionally, this calcium-binding protein is found in the basal body complexes (the functional homolog of the centrosome in animal cell). In mitotic cells it is specifically associated with the poles of the mitotic spindles at the sites of the duplicated basal body complexes. The polypeptide is Caltractin (Tetraselmis striata (Green microalga)).